The primary structure comprises 124 residues: UPF0102 protein HEAR0176 (124 aa).

Belongs to the UPF0102 family.

This Herminiimonas arsenicoxydans protein is UPF0102 protein HEAR0176.